The primary structure comprises 427 residues: UPF0597 protein CPR_0790 (427 aa).

The protein belongs to the UPF0597 family.

The polypeptide is UPF0597 protein CPR_0790 (Clostridium perfringens (strain SM101 / Type A)).